Consider the following 1202-residue polypeptide: MRPIRMYKNNQERTTTKHQETIEDNQNEQTTSDQRFTRSSNSGKINVERISSSRHQIADGKTMSSYTTNEANYTSKDSVQHGGSSITYTSNTTGNPRVTNARANIDETYATGTVEDLSSTSHGQEPEIESFADRAELAMMIQGMTVGALTVQPMRSIRSTFANLANILIFHDVFATEDKPTSSIEYHSDEMVVNMPKQTYNPIDTVAKILYLPSLEKFKYGTGIVQMNYSSNVSQLFPNTTNIINTITDGLTYANRTEFFIRVMVLFMMDRKILTMDFYDVDASAISNNAILPTIPTITGVSPLLRIDTRTEPIWYNDAIKTLINNLTIQYGKIKTVLDANAVKRYSVVGYPIDQFRAYLYNHNLLEYLGKKVKREDIMSLIKALSYEFDLITISDLEYQNIPKWFSDNDLSRFVFAVCMFPDIIRQFHALNIDYFSQANAFTVKSENSIIKMLNSNQNMEPSIINWFLFRICAIDKTVIDDYFSLEMTPIIMRPKLYDFDMKRGEPVSLLYILELILFSIMFPNVTQHMLGQIQARILFICMYAFRQEYLKFIAKFGFFYKIVNGRKEYIQVANQNERMSENVDVLTGNLYPSLFTDDPTLSSVAPTLAKIARLMKPTTSLTPDERAISAKFPRFKDASHLNPYSSLNVGGRTQHSVTYTRMYDAIDEMFNLILKSFANNFAQRPRAGVTQLKSLLTQLTEPLCLELDGHVYHLYNVMANMMQNFIPNTDGQFHSFRACAYAVVDSGNIYRVVQNGDELNESLVIDTAIVWGLLGNTDNAYGNAIGATGTANVPTKVQPVIPTPDNFITPTIHLKTSIDAVCSVEGILLLILSRQINIPGYEVELDKLRIGISQPKVSERQYQRARESIKNMLGSGDYNIAPLHFLLHTEHRSTRLSKPLIRRVFDNVVQPYVANLDPAEFENTPQLIESSNMTRLQIALKMLTGDMDDIVKGLILHKRACAKFDVYETLTIPNDVQTIVLTMQHISTQTENNIVYYVFLINGVKIFAEDVKNINFQVDTTGIWPEHVVTLLLRAINNGFNTYISMPNILYKPTITADVRQFLNTTKAEVLLVSNRSVIHEIMFFDNALQPKKSSDTLALSEAVYRTIWNSSVITQRILARGLMNLEDNKPPEAKISQQSELDMGKIDETSGEPIYTSGLKKMDSSKISMFNVVLSAGSDVIRQAAIKYSAVRTQEVILFE.

2 disordered regions span residues 1 to 45 (MRPI…SGKI) and 73 to 99 (YTSK…PRVT). Residues 10 to 21 (NQERTTTKHQET) are compositionally biased toward basic and acidic residues. The span at 27–45 (NEQTTSDQRFTRSSNSGKI) shows a compositional bias: polar residues.

Belongs to the turreted BTV-fold inner capsid family. In terms of assembly, homodecamer; each decamer is made up of two conformers of VP2, called VP2A and VP2B. 12 homodecamers assemble to form an icosahedral capsid.

It is found in the virion. Its function is as follows. Inner capsid protein that self-assembles to form an icosahedral capsid with a T=2 symmetry, which consists of 120 copies of VP2, with channels at each of its five-fold vertices. This capsid constitutes the innermost concentric layer of the viral mature particle. This is Inner capsid protein VP3 (S3) from Aedes pseudoscutellaris reovirus (isolate France) (ApRV).